The following is a 167-amino-acid chain: UPF0254 protein MJ1251 (167 aa).

It belongs to the UPF0254 family.

This Methanocaldococcus jannaschii (strain ATCC 43067 / DSM 2661 / JAL-1 / JCM 10045 / NBRC 100440) (Methanococcus jannaschii) protein is UPF0254 protein MJ1251.